Reading from the N-terminus, the 427-residue chain is Glutamate-1-semialdehyde 2,1-aminomutase (427 aa).

Lys267 carries the N6-(pyridoxal phosphate)lysine modification.

The protein belongs to the class-III pyridoxal-phosphate-dependent aminotransferase family. HemL subfamily. Homodimer. Pyridoxal 5'-phosphate serves as cofactor.

The protein resides in the cytoplasm. It carries out the reaction (S)-4-amino-5-oxopentanoate = 5-aminolevulinate. Its pathway is porphyrin-containing compound metabolism; protoporphyrin-IX biosynthesis; 5-aminolevulinate from L-glutamyl-tRNA(Glu): step 2/2. The polypeptide is Glutamate-1-semialdehyde 2,1-aminomutase (Acetivibrio thermocellus (strain ATCC 27405 / DSM 1237 / JCM 9322 / NBRC 103400 / NCIMB 10682 / NRRL B-4536 / VPI 7372) (Clostridium thermocellum)).